A 630-amino-acid polypeptide reads, in one-letter code: tRNA uridine 5-carboxymethylaminomethyl modification enzyme MnmG (630 aa).

G13 to G18 provides a ligand contact to FAD. G273–F287 contributes to the NAD(+) binding site.

This sequence belongs to the MnmG family. As to quaternary structure, homodimer. Heterotetramer of two MnmE and two MnmG subunits. The cofactor is FAD.

It is found in the cytoplasm. Its function is as follows. NAD-binding protein involved in the addition of a carboxymethylaminomethyl (cmnm) group at the wobble position (U34) of certain tRNAs, forming tRNA-cmnm(5)s(2)U34. This chain is tRNA uridine 5-carboxymethylaminomethyl modification enzyme MnmG, found in Actinobacillus pleuropneumoniae serotype 5b (strain L20).